Reading from the N-terminus, the 322-residue chain is Sulfate adenylyltransferase subunit 2 (322 aa).

The protein belongs to the PAPS reductase family. CysD subfamily. As to quaternary structure, heterodimer composed of CysD, the smaller subunit, and CysN.

The catalysed reaction is sulfate + ATP + H(+) = adenosine 5'-phosphosulfate + diphosphate. It participates in sulfur metabolism; hydrogen sulfide biosynthesis; sulfite from sulfate: step 1/3. Functionally, with CysN forms the ATP sulfurylase (ATPS) that catalyzes the adenylation of sulfate producing adenosine 5'-phosphosulfate (APS) and diphosphate, the first enzymatic step in sulfur assimilation pathway. APS synthesis involves the formation of a high-energy phosphoric-sulfuric acid anhydride bond driven by GTP hydrolysis by CysN coupled to ATP hydrolysis by CysD. This Bradyrhizobium sp. (strain BTAi1 / ATCC BAA-1182) protein is Sulfate adenylyltransferase subunit 2.